Reading from the N-terminus, the 89-residue chain is Small ribosomal subunit protein uS17 (89 aa).

The protein belongs to the universal ribosomal protein uS17 family. Part of the 30S ribosomal subunit.

Functionally, one of the primary rRNA binding proteins, it binds specifically to the 5'-end of 16S ribosomal RNA. The chain is Small ribosomal subunit protein uS17 from Verminephrobacter eiseniae (strain EF01-2).